A 296-amino-acid chain; its full sequence is Cobalamin trafficking protein CblD (296 aa).

The transit peptide at methionine 1 to glycine 38 directs the protein to the mitochondrion. Lysine 203 is subject to N6-acetyllysine.

In terms of assembly, heterodimer with MMACHC. Forms a multiprotein complex with MMACHC, MTR and MTRR. In terms of tissue distribution, widely expressed at high levels.

Its subcellular location is the cytoplasm. The protein localises to the mitochondrion. Its function is as follows. Involved in cobalamin metabolism and trafficking. Plays a role in regulating the biosynthesis and the proportion of two coenzymes, methylcob(III)alamin (MeCbl) and 5'-deoxyadenosylcobalamin (AdoCbl). Promotes oxidation of cob(II)alamin bound to MMACHC. The processing of cobalamin in the cytosol occurs in a multiprotein complex composed of at least MMACHC, MMADHC, MTRR (methionine synthase reductase) and MTR (methionine synthase) which may contribute to shuttle safely and efficiently cobalamin towards MTR in order to produce methionine. This chain is Cobalamin trafficking protein CblD, found in Homo sapiens (Human).